The following is a 359-amino-acid chain: Membrane-bound lytic murein transglycosylase C (359 aa).

Residues 1 to 16 (MKKYLALALIAPLLIS) form the signal peptide. C17 is lipidated: N-palmitoyl cysteine. C17 carries the S-diacylglycerol cysteine lipid modification.

This sequence belongs to the transglycosylase Slt family.

It is found in the cell outer membrane. The enzyme catalyses Exolytic cleavage of the (1-&gt;4)-beta-glycosidic linkage between N-acetylmuramic acid (MurNAc) and N-acetylglucosamine (GlcNAc) residues in peptidoglycan, from either the reducing or the non-reducing ends of the peptidoglycan chains, with concomitant formation of a 1,6-anhydrobond in the MurNAc residue.. In terms of biological role, murein-degrading enzyme. May play a role in recycling of muropeptides during cell elongation and/or cell division. The sequence is that of Membrane-bound lytic murein transglycosylase C from Escherichia coli O127:H6 (strain E2348/69 / EPEC).